The chain runs to 123 residues: Ribulose bisphosphate carboxylase small subunit, chloroplastic 1 (123 aa).

At M1 the chain carries Methionine derivative.

This sequence belongs to the RuBisCO small chain family. In terms of assembly, heterohexadecamer of 8 large and 8 small subunits.

It is found in the plastid. It localises to the chloroplast. In terms of biological role, ruBisCO catalyzes two reactions: the carboxylation of D-ribulose 1,5-bisphosphate, the primary event in carbon dioxide fixation, as well as the oxidative fragmentation of the pentose substrate. Both reactions occur simultaneously and in competition at the same active site. Although the small subunit is not catalytic it is essential for maximal activity. This is Ribulose bisphosphate carboxylase small subunit, chloroplastic 1 from Spinacia oleracea (Spinach).